The primary structure comprises 368 residues: Putative transport protein bbp_117 (368 aa).

The next 8 helical transmembrane spans lie at 13–35 (VIFS…RPFF), 39–61 (AWAS…LLWG), 68–90 (VMMT…NSLI), 159–181 (HFGR…YWNG), 216–238 (LGVV…ISGI), 248–270 (IIIF…IWLY), 277–299 (WGTV…RPIL), and 314–336 (GVIG…VLII).

This sequence belongs to the autoinducer-2 exporter (AI-2E) (TC 2.A.86) family.

The protein resides in the cell membrane. The protein is Putative transport protein bbp_117 of Buchnera aphidicola subsp. Baizongia pistaciae (strain Bp).